The primary structure comprises 159 residues: Ribosomal RNA large subunit methyltransferase H (159 aa).

S-adenosyl-L-methionine-binding positions include L76, G107, and 126–131 (LSSLTL).

It belongs to the RNA methyltransferase RlmH family. As to quaternary structure, homodimer.

The protein localises to the cytoplasm. It catalyses the reaction pseudouridine(1915) in 23S rRNA + S-adenosyl-L-methionine = N(3)-methylpseudouridine(1915) in 23S rRNA + S-adenosyl-L-homocysteine + H(+). Specifically methylates the pseudouridine at position 1915 (m3Psi1915) in 23S rRNA. This is Ribosomal RNA large subunit methyltransferase H from Cupriavidus pinatubonensis (strain JMP 134 / LMG 1197) (Cupriavidus necator (strain JMP 134)).